We begin with the raw amino-acid sequence, 139 residues long: uncharacterized protein (139 aa).

In terms of domain architecture, HTH cro/C1-type spans 8–63 (LRELRRARKLTVNQLAVYSGISSATISKIENGKRGTPKPATIKKLAAVLKVPYENL). Residues 19–38 (VNQLAVYSGISSATISKIEN) constitute a DNA-binding region (H-T-H motif).

This is an uncharacterized protein from Bacillus subtilis (strain 168).